The following is a 463-amino-acid chain: Siroheme synthase 1 (463 aa).

The segment at 1 to 203 (MDFLPLFCQL…GQQQAAEESV (203 aa)) is precorrin-2 dehydrogenase /sirohydrochlorin ferrochelatase. NAD(+)-binding positions include 22 to 23 (EV) and 43 to 44 (PH). Ser-128 carries the post-translational modification Phosphoserine. The tract at residues 215–463 (GSVTLVGAGP…YGEANTLAGV (249 aa)) is uroporphyrinogen-III C-methyltransferase. Pro-224 lines the S-adenosyl-L-methionine pocket. The Proton acceptor role is filled by Asp-247. Lys-269 (proton donor) is an active-site residue. Residues 300 to 302 (GGD), Ile-305, 330 to 331 (TA), Met-382, and Gly-411 each bind S-adenosyl-L-methionine.

The protein in the N-terminal section; belongs to the precorrin-2 dehydrogenase / sirohydrochlorin ferrochelatase family. In the C-terminal section; belongs to the precorrin methyltransferase family.

It catalyses the reaction uroporphyrinogen III + 2 S-adenosyl-L-methionine = precorrin-2 + 2 S-adenosyl-L-homocysteine + H(+). The enzyme catalyses precorrin-2 + NAD(+) = sirohydrochlorin + NADH + 2 H(+). It carries out the reaction siroheme + 2 H(+) = sirohydrochlorin + Fe(2+). It functions in the pathway cofactor biosynthesis; adenosylcobalamin biosynthesis; precorrin-2 from uroporphyrinogen III: step 1/1. The protein operates within cofactor biosynthesis; adenosylcobalamin biosynthesis; sirohydrochlorin from precorrin-2: step 1/1. It participates in porphyrin-containing compound metabolism; siroheme biosynthesis; precorrin-2 from uroporphyrinogen III: step 1/1. Its pathway is porphyrin-containing compound metabolism; siroheme biosynthesis; siroheme from sirohydrochlorin: step 1/1. It functions in the pathway porphyrin-containing compound metabolism; siroheme biosynthesis; sirohydrochlorin from precorrin-2: step 1/1. Its function is as follows. Multifunctional enzyme that catalyzes the SAM-dependent methylations of uroporphyrinogen III at position C-2 and C-7 to form precorrin-2 via precorrin-1. Then it catalyzes the NAD-dependent ring dehydrogenation of precorrin-2 to yield sirohydrochlorin. Finally, it catalyzes the ferrochelation of sirohydrochlorin to yield siroheme. In Aeromonas hydrophila subsp. hydrophila (strain ATCC 7966 / DSM 30187 / BCRC 13018 / CCUG 14551 / JCM 1027 / KCTC 2358 / NCIMB 9240 / NCTC 8049), this protein is Siroheme synthase 1.